The chain runs to 344 residues: tRNA N6-adenosine threonylcarbamoyltransferase (344 aa).

Residues His112 and His116 each coordinate Fe cation. Substrate is bound by residues 134 to 138 (LASGG), Asp167, Gly180, and Asn280. Asp308 serves as a coordination point for Fe cation.

This sequence belongs to the KAE1 / TsaD family. Fe(2+) is required as a cofactor.

Its subcellular location is the cytoplasm. It carries out the reaction L-threonylcarbamoyladenylate + adenosine(37) in tRNA = N(6)-L-threonylcarbamoyladenosine(37) in tRNA + AMP + H(+). In terms of biological role, required for the formation of a threonylcarbamoyl group on adenosine at position 37 (t(6)A37) in tRNAs that read codons beginning with adenine. Is involved in the transfer of the threonylcarbamoyl moiety of threonylcarbamoyl-AMP (TC-AMP) to the N6 group of A37, together with TsaE and TsaB. TsaD likely plays a direct catalytic role in this reaction. In Rickettsia peacockii (strain Rustic), this protein is tRNA N6-adenosine threonylcarbamoyltransferase.